The following is a 125-amino-acid chain: UPF0738 protein GTNG_0708 (125 aa).

It belongs to the UPF0738 family.

This chain is UPF0738 protein GTNG_0708, found in Geobacillus thermodenitrificans (strain NG80-2).